We begin with the raw amino-acid sequence, 144 residues long: Large ribosomal subunit protein uL15 (144 aa).

Residues 1-48 form a disordered region; it reads MQLNNLKPAAGSKHAKRRVGRGIGSGLGKTAGRGHKGQKSRSGGFHKV. The span at 21 to 31 shows a compositional bias: gly residues; the sequence is RGIGSGLGKTA.

The protein belongs to the universal ribosomal protein uL15 family. Part of the 50S ribosomal subunit.

Its function is as follows. Binds to the 23S rRNA. This Cupriavidus taiwanensis (strain DSM 17343 / BCRC 17206 / CCUG 44338 / CIP 107171 / LMG 19424 / R1) (Ralstonia taiwanensis (strain LMG 19424)) protein is Large ribosomal subunit protein uL15.